Reading from the N-terminus, the 318-residue chain is MIETNVSRRHHETFIQVIQSYYQLTKPRIIPLLLITTAGSMWIAAQGQVDPVLLLVTMAGGTLAAASAQTINCIYDRDIDYEMERTRHRPMPSGKVQVRDALIFAIALAVLSFTLLTVFANLLAASLALSGIIFYVLIYTHWLKRHSTQNIVIGGAAGAIPALVGWAAVTGTLSWSAWLIFAIVFLWTPPHFWALALMIRDDYAKVGIPMLPVVEGNAATVKQIWYYTLITVAATLLLVYPLHASGIVYAAIAISLGAVFIRKSWRLLHNPEDRPTARELFLYSISYMMLLCLGMVVDSLPLTHHLVNAAINQLHLIS.

9 consecutive transmembrane segments (helical) span residues 29-49 (IIPLLLITTAGSMWIAAQGQV), 51-71 (PVLLLVTMAGGTLAAASAQTI), 102-122 (LIFAIALAVLSFTLLTVFANL), 123-143 (LAASLALSGIIFYVLIYTHWL), 151-171 (IVIGGAAGAIPALVGWAAVTG), 179-199 (LIFAIVFLWTPPHFWALALMI), 219-239 (ATVKQIWYYTLITVAATLLLV), 241-261 (PLHASGIVYAAIAISLGAVFI), and 280-300 (LFLYSISYMMLLCLGMVVDSL).

Belongs to the UbiA prenyltransferase family. Protoheme IX farnesyltransferase subfamily.

The protein localises to the cell inner membrane. It catalyses the reaction heme b + (2E,6E)-farnesyl diphosphate + H2O = Fe(II)-heme o + diphosphate. It participates in porphyrin-containing compound metabolism; heme O biosynthesis; heme O from protoheme: step 1/1. Converts heme B (protoheme IX) to heme O by substitution of the vinyl group on carbon 2 of heme B porphyrin ring with a hydroxyethyl farnesyl side group. The polypeptide is Protoheme IX farnesyltransferase (Nostoc sp. (strain PCC 7120 / SAG 25.82 / UTEX 2576)).